A 387-amino-acid polypeptide reads, in one-letter code: Phosphoglycerate kinase (387 aa).

Substrate contacts are provided by residues 21-23 (DLN), arginine 36, 59-62 (HLGR), arginine 113, and arginine 146. Residues lysine 197, glutamate 314, and 340 to 343 (GGDT) each bind ATP.

The protein belongs to the phosphoglycerate kinase family. Monomer.

It localises to the cytoplasm. It carries out the reaction (2R)-3-phosphoglycerate + ATP = (2R)-3-phospho-glyceroyl phosphate + ADP. Its pathway is carbohydrate degradation; glycolysis; pyruvate from D-glyceraldehyde 3-phosphate: step 2/5. The protein is Phosphoglycerate kinase of Aliivibrio fischeri (strain ATCC 700601 / ES114) (Vibrio fischeri).